Consider the following 494-residue polypeptide: Solute carrier family 2, facilitated glucose transporter member 3 (494 aa).

Topologically, residues 1 to 10 (MGTTKVTAPL) are cytoplasmic. A helical transmembrane segment spans residues 11 to 32 (IFAISVATIGSFQFGYNTGVIN). Over 33-64 (APEAIIKDFLNYTLEERSEPPPSSVLLTSLWS) the chain is Extracellular. Residue N43 is glycosylated (N-linked (GlcNAc...) asparagine). Residues 65 to 85 (LSVAIFSVGGMIGSFSVGLFV) traverse the membrane as a helical segment. Topologically, residues 86 to 90 (NRFGR) are cytoplasmic. Residues 91–111 (GNSMLIVNLLAIAGGCLMGFC) form a helical membrane-spanning segment. Topologically, residues 112–118 (KIAESVE) are extracellular. A helical transmembrane segment spans residues 119 to 142 (MLILGRLIIGLFCGLCTGFVPMYI). At 143–153 (GEISPTALRGA) the chain is on the cytoplasmic side. The chain crosses the membrane as a helical span at residues 154 to 174 (FGTLNQLGIVIGILVAQIFGL). Q159 contributes to the D-glucose binding site. Residues 175-183 (KVILGTEDL) lie on the Extracellular side of the membrane. A helical membrane pass occupies residues 184 to 204 (WPLLLGFTILPAIIQCAALPF). At 205 to 269 (CPESPRFLLI…LFRAPNYRQP (65 aa)) the chain is on the cytoplasmic side. T232 is modified (phosphothreonine). A helical transmembrane segment spans residues 270-290 (IIISIMLQLSQQLSGINAVFY). An important for selectivity against fructose region spans residues 277–279 (QLS). D-glucose-binding positions include 280–281 (QQ) and N286. Residues 291 to 304 (YSTGIFKDAGVQEP) lie on the Extracellular side of the membrane. A helical membrane pass occupies residues 305 to 325 (VYATIGAGVVNTIFTVVSVFL). A D-glucose-binding site is contributed by N315. Residues 326-331 (VERAGR) are Cytoplasmic-facing. The helical transmembrane segment at 332-352 (RTLHLIGLGGMAFCSILMTIS) threads the bilayer. Residues 353-363 (LLLKDNYSWMS) are Extracellular-facing. N358 carries an N-linked (GlcNAc...) asparagine glycan. Residues 364–389 (FICIGAILVFVAFFEIGPGPIPWFIV) traverse the membrane as a helical segment. The D-glucose site is built by E378 and W386. Topologically, residues 390-399 (AELFGQGPRP) are cytoplasmic. The helical transmembrane segment at 400-420 (AAMAVAGCSNWTSNFLVGLLF) threads the bilayer. Over 421 to 429 (PSAAFYLGA) the chain is Extracellular. A helical membrane pass occupies residues 430–450 (YVFIVFTVFLVIFWVFTFFKV). At 451-494 (PETRGRTFEEITRAFEGQTQTGTRGEKGPIMEMNSIQPTKDTNA) the chain is on the cytoplasmic side. The interval 469–494 (TQTGTRGEKGPIMEMNSIQPTKDTNA) is disordered. A compositionally biased stretch (polar residues) spans 484-494 (NSIQPTKDTNA). Phosphoserine is present on S485. Residue T492 is modified to Phosphothreonine.

This sequence belongs to the major facilitator superfamily. Sugar transporter (TC 2.A.1.1) family. Glucose transporter subfamily. In terms of assembly, interacts with SMIM43; the interaction may promote SLC2A1-mediated glucose transport to meet the energy needs of mesendoderm differentiation.

Its subcellular location is the cell membrane. The protein resides in the perikaryon. The protein localises to the cell projection. It carries out the reaction D-glucose(out) = D-glucose(in). It catalyses the reaction D-galactose(in) = D-galactose(out). Its activity is regulated as follows. Deoxyglucose transport is inhibited by D-glucose, D-galactose and maltose. Galactose transport is inhibited by D-glucose and maltose. Functionally, facilitative glucose transporter. Can also mediate the uptake of various other monosaccharides across the cell membrane. Mediates the uptake of glucose, 2-deoxyglucose, galactose, mannose, xylose and fucose, and probably also dehydroascorbate. Does not mediate fructose transport. Required for mesendoderm differentiation. The sequence is that of Solute carrier family 2, facilitated glucose transporter member 3 from Bos taurus (Bovine).